Consider the following 363-residue polypeptide: NAD(P)H-quinone oxidoreductase subunit 1, chloroplastic (363 aa).

6 helical membrane-spanning segments follow: residues 30–50, 104–124, 129–149, 248–268, 300–320, and 343–363; these read FLPI…IVWL, IAVI…HLVL, IGVF…LMSG, YSGI…LVSS, VFGT…FLFI, and FLLP…LLSL.

It belongs to the complex I subunit 1 family. As to quaternary structure, NDH is composed of at least 16 different subunits, 5 of which are encoded in the nucleus.

Its subcellular location is the plastid. It localises to the chloroplast thylakoid membrane. It catalyses the reaction a plastoquinone + NADH + (n+1) H(+)(in) = a plastoquinol + NAD(+) + n H(+)(out). It carries out the reaction a plastoquinone + NADPH + (n+1) H(+)(in) = a plastoquinol + NADP(+) + n H(+)(out). Functionally, NDH shuttles electrons from NAD(P)H:plastoquinone, via FMN and iron-sulfur (Fe-S) centers, to quinones in the photosynthetic chain and possibly in a chloroplast respiratory chain. The immediate electron acceptor for the enzyme in this species is believed to be plastoquinone. Couples the redox reaction to proton translocation, and thus conserves the redox energy in a proton gradient. The polypeptide is NAD(P)H-quinone oxidoreductase subunit 1, chloroplastic (Eucalyptus globulus subsp. globulus (Tasmanian blue gum)).